A 341-amino-acid chain; its full sequence is MTGSNMSECLADAMCQRCQARFAPTERIVNSNGELYHEHCFVCAQCFRPFPEGLFYEFEGRKYCEHDFQMLFAPCCGFCGEFVIGRVIKAMNANWHPGCFRCELCDVELADLGFVKNAGRHLCRPCHNREKAKGLGKFICQRCHLAIDEQPLMFKNDPYHPDHFSCSNCGKELTSDARELKGELYCLPCHDKMGIPICGACRRPIEGRVVNALGKQWHVEHFVCAKCEKPFLGHRHYEKKGLAYCETHYNQLFGDVCYNCSHVIEGDVVSALSKAWCVNCFSCSTCNMKLTLKNKFVEFDMKPVCKRCYERFPLELKKRLKKLSDLSSRKAQPKSVDVNSL.

5 LIM zinc-binding domains span residues 13-74, 76-133, 138-195, 196-255, and 256-315; these read AMCQ…LFAP, CGFC…EKAK, FICQ…KMGI, PICG…LFGD, and VCYN…FPLE. Ser328 bears the Phosphoserine mark.

As to quaternary structure, interacts with integrin-linked protein kinase 1 (ILK) via the first LIM domain, and in competition with LIMS1. Part of the heterotrimeric IPP complex composed of integrin-linked kinase (ILK), LIMS1 or LIMS2, and PARVA. Interacts with TGFB1I1. In terms of tissue distribution, detected in heart, lung, kidney, liver, urinary bladder, fat, skin, skeletal muscle, uterus, large intestine and testis.

The protein resides in the cell junction. The protein localises to the focal adhesion. Its subcellular location is the cell membrane. Its function is as follows. Adapter protein in a cytoplasmic complex linking beta-integrins to the actin cytoskeleton, bridges the complex to cell surface receptor tyrosine kinases and growth factor receptors. This chain is LIM and senescent cell antigen-like-containing domain protein 2 (Lims2), found in Mus musculus (Mouse).